A 269-amino-acid polypeptide reads, in one-letter code: Energy-coupling factor transporter ATP-binding protein EcfA1 (269 aa).

Residues 8 to 242 (IVFKNVSFQY…AEELTTIGLD (235 aa)) enclose the ABC transporter domain. An ATP-binding site is contributed by 42–49 (GHNGSGKS).

It belongs to the ABC transporter superfamily. Energy-coupling factor EcfA family. Forms a stable energy-coupling factor (ECF) transporter complex composed of 2 membrane-embedded substrate-binding proteins (S component), 2 ATP-binding proteins (A component) and 2 transmembrane proteins (T component).

It is found in the cell membrane. Functionally, ATP-binding (A) component of a common energy-coupling factor (ECF) ABC-transporter complex. Unlike classic ABC transporters this ECF transporter provides the energy necessary to transport a number of different substrates. In Staphylococcus aureus (strain MSSA476), this protein is Energy-coupling factor transporter ATP-binding protein EcfA1.